We begin with the raw amino-acid sequence, 302 residues long: Nucleotide-binding protein Bmul_0520/BMULJ_02739 (302 aa).

Residue 8–15 (GISGSGKS) participates in ATP binding. Residue 57 to 60 (DARS) coordinates GTP.

This sequence belongs to the RapZ-like family.

Its function is as follows. Displays ATPase and GTPase activities. This chain is Nucleotide-binding protein Bmul_0520/BMULJ_02739, found in Burkholderia multivorans (strain ATCC 17616 / 249).